The sequence spans 614 residues: Aspartate--tRNA ligase (614 aa).

Glu174 lines the L-aspartate pocket. An aspartate region spans residues 198 to 201 (QLFK). Arg220 lines the L-aspartate pocket. Residues 220–222 (RDE) and Gln229 contribute to the ATP site. An L-aspartate-binding site is contributed by His448. ATP is bound at residue Glu482. Residue Arg489 participates in L-aspartate binding. 534–537 (GLDR) contributes to the ATP binding site. The interval 587 to 614 (YEDSVKETEQRLEKEAQEDADKNSTWDE) is disordered.

It belongs to the class-II aminoacyl-tRNA synthetase family. Type 1 subfamily. As to quaternary structure, homodimer.

It is found in the cytoplasm. The catalysed reaction is tRNA(Asp) + L-aspartate + ATP = L-aspartyl-tRNA(Asp) + AMP + diphosphate. In terms of biological role, catalyzes the attachment of L-aspartate to tRNA(Asp) in a two-step reaction: L-aspartate is first activated by ATP to form Asp-AMP and then transferred to the acceptor end of tRNA(Asp). This chain is Aspartate--tRNA ligase, found in Lactobacillus johnsonii (strain CNCM I-12250 / La1 / NCC 533).